Reading from the N-terminus, the 185-residue chain is Threonylcarbamoyl-AMP synthase (185 aa).

In terms of domain architecture, YrdC-like spans 4–185; it reads SWRVQQAAQD…IATAQIVRAG (182 aa).

Belongs to the SUA5 family. TsaC subfamily.

It is found in the cytoplasm. The enzyme catalyses L-threonine + hydrogencarbonate + ATP = L-threonylcarbamoyladenylate + diphosphate + H2O. Functionally, required for the formation of a threonylcarbamoyl group on adenosine at position 37 (t(6)A37) in tRNAs that read codons beginning with adenine. Catalyzes the conversion of L-threonine, HCO(3)(-)/CO(2) and ATP to give threonylcarbamoyl-AMP (TC-AMP) as the acyladenylate intermediate, with the release of diphosphate. This chain is Threonylcarbamoyl-AMP synthase, found in Pseudomonas syringae pv. syringae (strain B728a).